A 447-amino-acid chain; its full sequence is Signal recognition particle 54 kDa protein (447 aa).

GTP-binding positions include 103-110, 185-189, and 245-248; these read GVQGSGKT, DTAGR, and TKMD.

Belongs to the GTP-binding SRP family. SRP54 subfamily. In terms of assembly, part of the signal recognition particle protein translocation system, which is composed of SRP and FtsY. Archaeal SRP consists of a 7S RNA molecule of 300 nucleotides and two protein subunits: SRP54 and SRP19.

It is found in the cytoplasm. It catalyses the reaction GTP + H2O = GDP + phosphate + H(+). Involved in targeting and insertion of nascent membrane proteins into the cytoplasmic membrane. Binds to the hydrophobic signal sequence of the ribosome-nascent chain (RNC) as it emerges from the ribosomes. The SRP-RNC complex is then targeted to the cytoplasmic membrane where it interacts with the SRP receptor FtsY. In Saccharolobus islandicus (strain Y.N.15.51 / Yellowstone #2) (Sulfolobus islandicus), this protein is Signal recognition particle 54 kDa protein.